The following is a 113-amino-acid chain: Probable 4-amino-4-deoxy-L-arabinose-phosphoundecaprenol flippase subunit ArnE (113 aa).

The next 3 helical transmembrane spans lie at 39 to 59, 62 to 82, and 91 to 111; these read IFWL…WLRL, ILPL…VTLI, and VNVK…LMSM. The region spanning 42 to 111 is the EamA domain; it reads LITAIAMLGF…IMLGIVLMSM (70 aa).

Belongs to the ArnE family. As to quaternary structure, heterodimer of ArnE and ArnF.

Its subcellular location is the cell inner membrane. Its pathway is bacterial outer membrane biogenesis; lipopolysaccharide biosynthesis. Its function is as follows. Translocates 4-amino-4-deoxy-L-arabinose-phosphoundecaprenol (alpha-L-Ara4N-phosphoundecaprenol) from the cytoplasmic to the periplasmic side of the inner membrane. This chain is Probable 4-amino-4-deoxy-L-arabinose-phosphoundecaprenol flippase subunit ArnE, found in Proteus mirabilis (strain HI4320).